A 165-amino-acid polypeptide reads, in one-letter code: Transcriptional repressor NrdR (165 aa).

A zinc finger lies at 3–34 (CPFCRNPDSRVVDSRMADDGSAIRRRRQCPEC). The 91-residue stretch at 46–136 (LTVIKRSGVG…VYQAFESLED (91 aa)) folds into the ATP-cone domain.

Belongs to the NrdR family. Zn(2+) is required as a cofactor.

Functionally, negatively regulates transcription of bacterial ribonucleotide reductase nrd genes and operons by binding to NrdR-boxes. The chain is Transcriptional repressor NrdR from Arthrobacter sp. (strain FB24).